The following is a 239-amino-acid chain: Small ribosomal subunit protein uS3c (239 aa).

One can recognise a KH type-2 domain in the interval Ile-43–Lys-139. Residues Asn-50–Met-74 are disordered.

The protein belongs to the universal ribosomal protein uS3 family. As to quaternary structure, part of the 30S ribosomal subunit.

It is found in the plastid. The protein localises to the chloroplast. The protein is Small ribosomal subunit protein uS3c (rps3) of Hordeum vulgare (Barley).